Reading from the N-terminus, the 118-residue chain is Large ribosomal subunit protein eL18 (118 aa).

It belongs to the eukaryotic ribosomal protein eL18 family.

The chain is Large ribosomal subunit protein eL18 (rpl18e) from Sulfolobus acidocaldarius (strain ATCC 33909 / DSM 639 / JCM 8929 / NBRC 15157 / NCIMB 11770).